Here is a 598-residue protein sequence, read N- to C-terminus: Fumarate reductase flavoprotein subunit (598 aa).

FAD-binding positions include 12-16 (GAGGA), 36-38 (ISK), 44-52 (SHTVAAEGG), 156-158 (HFV), and D212. Tele-8alpha-FAD histidine is present on H45. Catalysis depends on residues H233 and R249. FAD contacts are provided by residues 356–357 (HY), E380, and 391–397 (RLGSNSL). The disordered stretch occupies residues 577–598 (AKRVYGGEADAQEKSDKEQANG). Positions 587–598 (AQEKSDKEQANG) are enriched in basic and acidic residues.

Belongs to the FAD-dependent oxidoreductase 2 family. FRD/SDH subfamily. Part of an enzyme complex containing four subunits: a flavoprotein (FrdA), an iron-sulfur protein (FrdB), and two hydrophobic anchor proteins (FrdC and FrdD). Interacts with SdhE. FAD serves as cofactor.

The protein localises to the cell inner membrane. It carries out the reaction a quinone + succinate = fumarate + a quinol. The catalysed reaction is a menaquinone + succinate = a menaquinol + fumarate. Its function is as follows. Two distinct, membrane-bound, FAD-containing enzymes are responsible for the catalysis of fumarate and succinate interconversion; the fumarate reductase is used in anaerobic growth, and the succinate dehydrogenase is used in aerobic growth. The sequence is that of Fumarate reductase flavoprotein subunit from Serratia sp. (strain ATCC 39006) (Prodigiosinella confusarubida).